The primary structure comprises 129 residues: MNLIAILEQEEIGRALGEKTIPEFAPGDTVIVSVNVVEGTRKRVQAYEGVVIAKRNRGLNSSFIVRKISSGEGVERTFQTYSPLLASIVVKRRGDVRRAKLYYLRDRSGKSARIKEKLVAKKDRAAPEA.

It belongs to the bacterial ribosomal protein bL19 family.

In terms of biological role, this protein is located at the 30S-50S ribosomal subunit interface and may play a role in the structure and function of the aminoacyl-tRNA binding site. In Paraburkholderia phytofirmans (strain DSM 17436 / LMG 22146 / PsJN) (Burkholderia phytofirmans), this protein is Large ribosomal subunit protein bL19.